Consider the following 709-residue polypeptide: Tyrosine-protein phosphatase cdc-14 (709 aa).

The 159-residue stretch at Asp196–Ser354 folds into the Tyrosine-protein phosphatase domain. Residue Cys295 is the Phosphocysteine intermediate of the active site. The short motif at Lys366 to Arg371 is the Nuclear localization signal element. The Nuclear export signal motif lies at Leu372–Leu381. Disordered stretches follow at residues Val403–Thr541, Arg573–Pro594, and Glu628–Ser661. The segment covering Gln404–Pro413 has biased composition (polar residues). Over residues Thr463 to Thr479 the composition is skewed to low complexity. Composition is skewed to polar residues over residues Pro480–Leu490 and Pro501–Gly521. A compositionally biased stretch (low complexity) spans Arg526 to Thr541. The segment covering Pro639 to Lys649 has biased composition (polar residues).

Belongs to the protein-tyrosine phosphatase family. Non-receptor class CDC14 subfamily.

Its subcellular location is the cytoplasm. The protein resides in the cytoskeleton. It is found in the microtubule organizing center. It localises to the centrosome. The protein localises to the spindle. Its subcellular location is the midbody. The protein resides in the nucleus. It catalyses the reaction O-phospho-L-tyrosyl-[protein] + H2O = L-tyrosyl-[protein] + phosphate. Inhibited by sodium orthovanadate. Weakly inhibited by sodium fluoride and okadaic acid. In terms of biological role, protein phosphatase that negatively regulates the G1-to-S phase transition to inhibit the cell cycle and establish quiescence in cells of multiple lineages including vulval, hypodermal and intestinal. Promotes nuclear accumulation and activity of the cyclin-dependent kinase inhibitor cki-1 which leads to inhibition of G1 progression during vulval tissue development. Has been shown to not be required for cytokinesis. However, in the embryo, in a contrasting study, has been shown to act as a regulator of central spindle formation and cytokinesis, and may be required for localization of the spindle component zen-4, and its interacting partner air-2 at the spindle during late cell divisions. Main regulator of cell cycle arrest in vulval precursor cells. In Caenorhabditis elegans, this protein is Tyrosine-protein phosphatase cdc-14.